The primary structure comprises 31 residues: Cytochrome b6-f complex subunit 6 (31 aa).

The chain crosses the membrane as a helical span at residues 4–26 (LTSYFGFLLAASTITPALFIGLN).

The protein belongs to the PetL family. In terms of assembly, the 4 large subunits of the cytochrome b6-f complex are cytochrome b6, subunit IV (17 kDa polypeptide, PetD), cytochrome f and the Rieske protein, while the 4 small subunits are PetG, PetL, PetM and PetN. The complex functions as a dimer.

It localises to the plastid. The protein resides in the chloroplast thylakoid membrane. Component of the cytochrome b6-f complex, which mediates electron transfer between photosystem II (PSII) and photosystem I (PSI), cyclic electron flow around PSI, and state transitions. PetL is important for photoautotrophic growth as well as for electron transfer efficiency and stability of the cytochrome b6-f complex. In Phalaenopsis aphrodite subsp. formosana (Moth orchid), this protein is Cytochrome b6-f complex subunit 6.